The following is a 326-amino-acid chain: Putative HTH-type transcriptional regulator y4qH (326 aa).

One can recognise an HTH luxR-type domain in the interval 257 to 322 (AVQKIPALSL…VAAIKAISLG (66 aa)). The segment at residues 281-300 (SWDIGVIMRISENTVNFHIK) is a DNA-binding region (H-T-H motif).

This sequence belongs to the autoinducer-regulated transcriptional regulatory protein family.

This Sinorhizobium fredii (strain NBRC 101917 / NGR234) protein is Putative HTH-type transcriptional regulator y4qH.